The following is an 825-amino-acid chain: MSEGTYQRLWEASHVTLEEVLEKEPSVLEPVPSRERQSFQYRISVLYLYYLGLLRRFNLAYDQMVQPQKRRLLRRLLDGVAGRVLELKDELVRVDLCETHCLDRVLQDLKLTPADLEVPIPKYFQLEQSSAVKARQQMLADILNRLEPLVSQENLRGLSRTAALILVQSAERARQGRLRATFMREIRKEEERDRRIWENGQQKFSRDQGAIVIQKVWKGYLQRKRIEQDRRVEMEFIGMLPSPNQTARLNTLNQAFLGEESRRMRQVEKEEEFQEAIGKTYESLTETEGPDMKERMKDQIRQWFIECHALTGRFPDYPDEASGGSYLIFADKTPEQVRLDLEAQAQESRKKDQEKKEKNKEKEKEKKEKKKKKVKEEKVKKEPEVMFRVLPSKSIPVINAGHEEYTSVWKSRYDNKHPSQNFDSETLREEKRKQVEMEIRVQVDELMRQELKNLRLAVDREETRPLKSPKKKGGKKSGKKKKEKDLTPDRSVDSLFEELVIIGLIKKSALVTLSDYIGDCLYLGSTLTLANKMPMPSLFDIRQNMALYGVLRLGSHDIHTMAPLVRSILLVGPSGMGKKMLVQAVCTETGANLFDLSPDNLMGKYPGKNGAQLLVHIVFKVARLLQPSVIWIGNTEKTFYKKVPKEERTMDPKRIKKDLMRATKQLSPGDRVMLIGTTERPQLAEMKGLCRFYERILFIPRPDYASRYVLWKRMIESQGRGVQLTSSLDVSALARVSDGYTPSHILQSIQSVLTERRLLQLIKKPLVASEFVGHLARLDPVYREEEESLKEWFFKTPLGKKNMKFTKDQLEAEEARLTKEKKKKK.

Residues 206–235 (RDQGAIVIQKVWKGYLQRKRIEQDRRVEME) form the IQ domain. Residues 344 to 366 (QAQESRKKDQEKKEKNKEKEKEK) show a composition bias toward basic and acidic residues. 2 disordered regions span residues 344–378 (QAQE…KEEK) and 459–487 (DREE…KDLT). The segment covering 467–482 (KSPKKKGGKKSGKKKK) has biased composition (basic residues). 572-579 (GPSGMGKK) serves as a coordination point for ATP.

Belongs to the AAA ATPase family.

The chain is IQ and AAA domain-containing protein 1-like (Iqca1l) from Mus musculus (Mouse).